Here is a 480-residue protein sequence, read N- to C-terminus: UDP-N-acetylmuramoylalanine--D-glutamate ligase (480 aa).

Residue 120-126 (GTNGKTT) participates in ATP binding.

The protein belongs to the MurCDEF family.

It is found in the cytoplasm. The catalysed reaction is UDP-N-acetyl-alpha-D-muramoyl-L-alanine + D-glutamate + ATP = UDP-N-acetyl-alpha-D-muramoyl-L-alanyl-D-glutamate + ADP + phosphate + H(+). It participates in cell wall biogenesis; peptidoglycan biosynthesis. Its function is as follows. Cell wall formation. Catalyzes the addition of glutamate to the nucleotide precursor UDP-N-acetylmuramoyl-L-alanine (UMA). The sequence is that of UDP-N-acetylmuramoylalanine--D-glutamate ligase from Nocardia farcinica (strain IFM 10152).